Consider the following 128-residue polypeptide: D-ribose pyranase (128 aa).

H20 (proton donor) is an active-site residue. Residues D28, H95, and 117–119 contribute to the substrate site; that span reads YSN.

It belongs to the RbsD / FucU family. RbsD subfamily. In terms of assembly, homodecamer.

It is found in the cytoplasm. The enzyme catalyses beta-D-ribopyranose = beta-D-ribofuranose. Its pathway is carbohydrate metabolism; D-ribose degradation; D-ribose 5-phosphate from beta-D-ribopyranose: step 1/2. In terms of biological role, catalyzes the interconversion of beta-pyran and beta-furan forms of D-ribose. The chain is D-ribose pyranase from Thermosipho africanus (strain TCF52B).